The primary structure comprises 279 residues: Pleckstrin homology domain-containing family F member 1 (279 aa).

The PH domain occupies 35 to 131 (VLLGEGVLTK…WISHIEECVR (97 aa)). Residues 152–212 (DKATDICMRC…VCSLCYRELA (61 aa)) form an FYVE-type zinc finger. Zn(2+) contacts are provided by cysteine 158, cysteine 161, cysteine 175, cysteine 178, cysteine 183, cysteine 186, cysteine 204, and cysteine 207. Residues 220-263 (AREGIGGSPPQLSHLGGTVCGASSGDDDDSDEDREGNGDGDWPT) form a disordered region. Acidic residues predominate over residues 244 to 253 (GDDDDSDEDR).

As to expression, widely expressed.

Its subcellular location is the nucleus. It localises to the cytoplasm. The protein resides in the perinuclear region. The protein localises to the lysosome. Its function is as follows. May induce apoptosis through the lysosomal-mitochondrial pathway. Translocates to the lysosome initiating the permeabilization of lysosomal membrane (LMP) and resulting in the release of CTSD and CTSL to the cytoplasm. Triggers the caspase-independent apoptosis by altering mitochondrial membrane permeabilization (MMP) resulting in the release of PDCD8. The protein is Pleckstrin homology domain-containing family F member 1 (Plekhf1) of Mus musculus (Mouse).